Consider the following 155-residue polypeptide: RING finger protein 122 (155 aa).

The chain crosses the membrane as a helical span at residues 40-60; it reads VIFGTGIFVFMLSLIFCCYFI. The RING-type; atypical zinc finger occupies 93–134; it reads CAVCLEDFKGKDELGVLPCQHAFHRKCLVKWLEVRCVCPMCN.

It localises to the golgi apparatus. The protein localises to the endoplasmic reticulum. It is found in the membrane. In terms of biological role, may induce necrosis and apoptosis. May play a role in cell viability. This is RING finger protein 122 (Rnf122) from Mus musculus (Mouse).